Here is a 287-residue protein sequence, read N- to C-terminus: POU domain class 2-associating factor 2 (287 aa).

Positions 10-32 (KRVYQGVRVKHTVKDLLAEKRSR) constitute an OCA domain. Disordered regions lie at residues 24-51 (DLLA…PPFI), 161-199 (TVPD…TQHR), and 247-279 (PKVG…MAWG). Composition is skewed to polar residues over residues 33-49 (QTSN…SQPP) and 180-199 (LPPS…TQHR).

It belongs to the POU2AF family. In terms of assembly, interacts with POU2F3 (via the POU domain) in a DNA-dependent manner; this interaction recruits POU2AF2 to chromatin and increases POU2F3 transactivation activity. As to expression, expressed in tuft cells of the small intestine, trachea, thymus, and colon.

It is found in the cytoplasm. Its subcellular location is the cytosol. It localises to the nucleus. Transcriptional coactivator of POU2F3. This complex drives the development of tuft cells, a rare chemosensory cells that coordinate immune and neural functions within mucosal epithelial tissues. The polypeptide is POU domain class 2-associating factor 2 (Mus musculus (Mouse)).